A 600-amino-acid polypeptide reads, in one-letter code: DNA primase (600 aa).

The segment at 38 to 62 (CPFHDEKTPSFIVYPTRGHYHCYGC) adopts a CHC2-type zinc-finger fold. A Toprim domain is found at 253-333 (KRVILVEGQA…GIAVIVCRLP (81 aa)). Mg(2+)-binding residues include glutamate 259, aspartate 304, and aspartate 306.

This sequence belongs to the DnaG primase family. In terms of assembly, monomer. Interacts with DnaB. Zn(2+) serves as cofactor. Mg(2+) is required as a cofactor.

It catalyses the reaction ssDNA + n NTP = ssDNA/pppN(pN)n-1 hybrid + (n-1) diphosphate.. In terms of biological role, RNA polymerase that catalyzes the synthesis of short RNA molecules used as primers for DNA polymerase during DNA replication. The polypeptide is DNA primase (Chlamydia muridarum (strain MoPn / Nigg)).